A 147-amino-acid polypeptide reads, in one-letter code: Hemoglobin subunit beta-1 (147 aa).

The Globin domain occupies 3–147; it reads NLTAKERQLI…IADALGKGYH (145 aa). Heme b-binding residues include His-64 and His-93.

The protein belongs to the globin family. As to quaternary structure, heterotetramer of two alpha chains and two beta chains. In terms of tissue distribution, red blood cells.

Its function is as follows. Involved in oxygen transport from the lung to the various peripheral tissues. This is Hemoglobin subunit beta-1 (hbb1) from Xenopus tropicalis (Western clawed frog).